The following is a 351-amino-acid chain: Ion-translocating oxidoreductase complex subunit D (351 aa).

4 consecutive transmembrane segments (helical) span residues 20-40, 44-64, 89-109, and 123-143; these read IMLW…YFFG, LIQV…TLSL, LPPL…IIIA, and PAMI…TSWL. Position 187 is an FMN phosphoryl threonine (T187). 5 helical membrane-spanning segments follow: residues 215–235, 244–264, 267–287, 301–321, and 322–342; these read LSGI…LFLL, IPVS…IIAP, FAQP…FFIA, LIFG…GGYP, and DGVA…DYYT.

Belongs to the NqrB/RnfD family. In terms of assembly, the complex is composed of six subunits: RnfA, RnfB, RnfC, RnfD, RnfE and RnfG. Requires FMN as cofactor.

The protein resides in the cell inner membrane. Part of a membrane-bound complex that couples electron transfer with translocation of ions across the membrane. This Pectobacterium atrosepticum (strain SCRI 1043 / ATCC BAA-672) (Erwinia carotovora subsp. atroseptica) protein is Ion-translocating oxidoreductase complex subunit D.